The sequence spans 51 residues: ATP synthase F(1) complex subunit epsilon, mitochondrial (51 aa).

Lysine 21, lysine 32, and lysine 37 each carry N6-acetyllysine; alternate. N6-succinyllysine; alternate occurs at positions 21, 32, and 37. Position 44 is an N6-acetyllysine (lysine 44).

It belongs to the eukaryotic ATPase epsilon family. In terms of assembly, component of the ATP synthase complex composed at least of ATP5F1A/subunit alpha, ATP5F1B/subunit beta, ATP5MC1/subunit c (homooctomer), MT-ATP6/subunit a, MT-ATP8/subunit 8, ATP5ME/subunit e, ATP5MF/subunit f, ATP5MG/subunit g, ATP5MK/subunit k, ATP5MJ/subunit j, ATP5F1C/subunit gamma, ATP5F1D/subunit delta, ATP5F1E/subunit epsilon, ATP5PF/subunit F6, ATP5PB/subunit b, ATP5PD/subunit d, ATP5PO/subunit OSCP. ATP synthase complex consists of a soluble F(1) head domain (subunits alpha(3) and beta(3)) - the catalytic core - and a membrane F(0) domain - the membrane proton channel (subunits c, a, 8, e, f, g, k and j). These two domains are linked by a central stalk (subunits gamma, delta, and epsilon) rotating inside the F1 region and a stationary peripheral stalk (subunits F6, b, d, and OSCP).

The protein resides in the mitochondrion. Its subcellular location is the mitochondrion inner membrane. Its function is as follows. Subunit epsilon, of the mitochondrial membrane ATP synthase complex (F(1)F(0) ATP synthase or Complex V) that produces ATP from ADP in the presence of a proton gradient across the membrane which is generated by electron transport complexes of the respiratory chain. ATP synthase complex consist of a soluble F(1) head domain - the catalytic core - and a membrane F(1) domain - the membrane proton channel. These two domains are linked by a central stalk rotating inside the F(1) region and a stationary peripheral stalk. During catalysis, ATP synthesis in the catalytic domain of F(1) is coupled via a rotary mechanism of the central stalk subunits to proton translocation. In vivo, can only synthesize ATP although its ATP hydrolase activity can be activated artificially in vitro. May be essential for the assembly of F(1) and may play an important role in the incorporation of the hydrophobic subunit c into the F(1)-c oligomer rotor of the mitochondrial ATP synthase complex. The sequence is that of ATP synthase F(1) complex subunit epsilon, mitochondrial from Rattus norvegicus (Rat).